The sequence spans 453 residues: GTPase Der (453 aa).

2 EngA-type G domains span residues P4–T169 and I177–K352. Residues G10–S17, D57–L61, N120–E123, G183–S190, D230–I234, and N295–D298 each bind GTP. One can recognise a KH-like domain in the interval R353–K438.

This sequence belongs to the TRAFAC class TrmE-Era-EngA-EngB-Septin-like GTPase superfamily. EngA (Der) GTPase family. Associates with the 50S ribosomal subunit.

Functionally, GTPase that plays an essential role in the late steps of ribosome biogenesis. This chain is GTPase Der, found in Nostoc sp. (strain PCC 7120 / SAG 25.82 / UTEX 2576).